The primary structure comprises 310 residues: Small ribosomal subunit biogenesis GTPase RsgA (310 aa).

The region spanning 77-238 (LSKQSHILAA…IIDTPGIKGF (162 aa)) is the CP-type G domain. GTP contacts are provided by residues 126-129 (NKVD) and 180-188 (GHSGVGKST). Zn(2+) contacts are provided by Cys-262, Cys-267, His-269, and Cys-275.

This sequence belongs to the TRAFAC class YlqF/YawG GTPase family. RsgA subfamily. As to quaternary structure, monomer. Associates with 30S ribosomal subunit, binds 16S rRNA. It depends on Zn(2+) as a cofactor.

It is found in the cytoplasm. One of several proteins that assist in the late maturation steps of the functional core of the 30S ribosomal subunit. Helps release RbfA from mature subunits. May play a role in the assembly of ribosomal proteins into the subunit. Circularly permuted GTPase that catalyzes slow GTP hydrolysis, GTPase activity is stimulated by the 30S ribosomal subunit. The sequence is that of Small ribosomal subunit biogenesis GTPase RsgA from Bacteroides fragilis (strain ATCC 25285 / DSM 2151 / CCUG 4856 / JCM 11019 / LMG 10263 / NCTC 9343 / Onslow / VPI 2553 / EN-2).